Here is a 118-residue protein sequence, read N- to C-terminus: Large ribosomal subunit protein bL20 (118 aa).

This sequence belongs to the bacterial ribosomal protein bL20 family.

Functionally, binds directly to 23S ribosomal RNA and is necessary for the in vitro assembly process of the 50S ribosomal subunit. It is not involved in the protein synthesizing functions of that subunit. The chain is Large ribosomal subunit protein bL20 from Elusimicrobium minutum (strain Pei191).